Here is a 430-residue protein sequence, read N- to C-terminus: Asparagine--tRNA ligase (430 aa).

It belongs to the class-II aminoacyl-tRNA synthetase family. As to quaternary structure, homodimer.

Its subcellular location is the cytoplasm. It carries out the reaction tRNA(Asn) + L-asparagine + ATP = L-asparaginyl-tRNA(Asn) + AMP + diphosphate + H(+). In Staphylococcus aureus (strain JH1), this protein is Asparagine--tRNA ligase.